The primary structure comprises 620 residues: Eukaryotic translation initiation factor 2-alpha kinase 1 (620 aa).

Residues 1-38 (MLGGGSVDGERDTDDDAAGAVAAPPAIDFPAEVSDPKY) form a disordered region. A compositionally biased stretch (low complexity) spans 18-28 (AGAVAAPPAID). An SIFI-degron motif is present at residues 85–104 (LHSKQVFKLLCQTFIKMGLL). One can recognise a Protein kinase domain in the interval 167 to 581 (FEELAILGKG…ALQLLQSELF (415 aa)). Residues 173–181 (LGKGGYGRV) and lysine 196 each bind ATP. Residue threonine 283 is modified to Phosphothreonine. The HRM 1 repeat unit spans residues 408–413 (ACPYVM). Aspartate 440 (proton acceptor) is an active-site residue. Phosphothreonine; by autocatalysis is present on residues threonine 484 and threonine 486. Threonine 491 bears the Phosphothreonine mark. An HRM 2 repeat occupies 550-555 (RCPVQA).

This sequence belongs to the protein kinase superfamily. Ser/Thr protein kinase family. GCN2 subfamily. As to quaternary structure, synthesized in an inactive form that binds to the N-terminal domain of CDC37. Has to be associated with a multiprotein complex containing Hsp90, CDC37 and PPP5C for maturation and activation by autophosphorylation. The phosphatase PPP5C modulates this activation. Homodimer; homodimerizes in presence of heme, forming a disulfide-linked inactive homodimer. Interacts with DELE1; binds both to full-length DELE1 and processed form of DELE1 (S-DELE1) in response to stress, leading to activate its protein kinase activity and trigger the integrated stress response (ISR). Activated by autophosphorylation; phosphorylated predominantly on serine and threonine residues, but also on tyrosine residues. Autophosphorylation at Thr-486 is required for kinase activation. The active autophosphorylated form apparently is largely refractory to cellular heme fluctuations. Post-translationally, ubiquitinated and degraded by the SIFI complex once the mitochondrial stress has been resolved, thereby providing stress response silencing. Within the SIFI complex, UBR4 initiates ubiquitin chain that are further elongated or branched by KCMF1.

The protein localises to the cytoplasm. It catalyses the reaction L-seryl-[protein] + ATP = O-phospho-L-seryl-[protein] + ADP + H(+). The enzyme catalyses L-threonyl-[protein] + ATP = O-phospho-L-threonyl-[protein] + ADP + H(+). In normal conditions, the protein kinase activity is inhibited; inhibition is relieved by various stress conditions. Inhibited by heme: in presence of heme, forms a disulfide-linked inactive homodimer. Heme depletion relieves inhibition and stimulates kinase activity by autophosphorylation. Inhibited by the heme metabolites biliverdin and bilirubin. Induced by oxidative stress generated by arsenite treatment. Binding of nitric oxide (NO) to the heme iron in the N-terminal heme-binding domain activates the kinase activity, while binding of carbon monoxide (CO) suppresses kinase activity. Protein kinase activity is also activated upon binding to DELE1 in response to various stress, triggering the integrated stress response (ISR): activated by full-length DELE1 in response to iron deficiency, while it is activated by the processed form of DELE1 (S-DELE1) in response to mitochondrial stress. Metabolic-stress sensing protein kinase that phosphorylates the alpha subunit of eukaryotic translation initiation factor 2 (EIF2S1/eIF-2-alpha) in response to various stress conditions. Key activator of the integrated stress response (ISR) required for adaptation to various stress, such as heme deficiency, oxidative stress, osmotic shock, mitochondrial dysfunction and heat shock. EIF2S1/eIF-2-alpha phosphorylation in response to stress converts EIF2S1/eIF-2-alpha in a global protein synthesis inhibitor, leading to a global attenuation of cap-dependent translation, while concomitantly initiating the preferential translation of ISR-specific mRNAs, such as the transcriptional activator ATF4, and hence allowing ATF4-mediated reprogramming. Acts as a key sensor of heme-deficiency: in normal conditions, binds hemin via a cysteine thiolate and histidine nitrogenous coordination, leading to inhibit the protein kinase activity. This binding occurs with moderate affinity, allowing it to sense the heme concentration within the cell: heme depletion relieves inhibition and stimulates kinase activity, activating the ISR. Thanks to this unique heme-sensing capacity, plays a crucial role to shut off protein synthesis during acute heme-deficient conditions. In red blood cells (RBCs), controls hemoglobin synthesis ensuring a coordinated regulation of the synthesis of its heme and globin moieties. It thereby plays an essential protective role for RBC survival in anemias of iron deficiency. Iron deficiency also triggers activation by full-length DELE1. Also activates the ISR in response to mitochondrial dysfunction: HRI/EIF2AK1 protein kinase activity is activated upon binding to the processed form of DELE1 (S-DELE1), thereby promoting the ATF4-mediated reprogramming. Also acts as an activator of mitophagy in response to mitochondrial damage: catalyzes phosphorylation of eIF-2-alpha (EIF2S1) following activation by S-DELE1, thereby promoting mitochondrial localization of EIF2S1, triggering PRKN-independent mitophagy. The sequence is that of Eukaryotic translation initiation factor 2-alpha kinase 1 from Rattus norvegicus (Rat).